Reading from the N-terminus, the 105-residue chain is Platelet factor 4 (105 aa).

Residues 1–29 (MSAAAVFRGLRPSPELLLLGLLLLPAVVA) form the signal peptide. The O-linked (GalNAc...) threonine; partial glycan is linked to T31. 2 cysteine pairs are disulfide-bonded: C44–C71 and C46–C87. Position 61 is a phosphoserine (S61). 96–102 (KKIIKKL) contributes to the heparin binding site.

Belongs to the intercrine alpha (chemokine CxC) family. As to quaternary structure, homotetramer. Interacts with TNFAIP6 (via Link domain). Interacts with CCR1. Interacts with CXCR3. Interacts with THBD; this interaction enhances generation of activated protein C. Post-translationally, O-linked glycan consists of Gal-GalNAc disaccharide which is modified with sialic acid residues (microheterogeneity).

It localises to the secreted. Its function is as follows. Chemokine released during platelet aggregation that plays a role in different biological processes including hematopoiesis, cell proliferation, differentiation, and activation. Acts via different functional receptors including CCR1, CXCR3A or CXCR3B. Upon interaction with CXCR3A receptor, induces activated T-lymphocytes migration mediated via downstream Ras/extracellular signal-regulated kinase (ERK) signaling. Neutralizes the anticoagulant effect of heparin by binding more strongly to heparin than to the chondroitin-4-sulfate chains of the carrier molecule. Plays a role in the inhibition of hematopoiesis and in the maintenance of hematopoietic stem cell (HSC) quiescence. Chemotactic for neutrophils and monocytes via CCR1. Inhibits endothelial cell proliferation. In cooperation with toll-like receptor 8/TLR8, induces chromatin remodeling and activates inflammatory gene expression via the TBK1-IRF5 axis. In addition, induces myofibroblast differentiation and collagen synthesis in different precursor cells, including endothelial cells, by stimulating endothelial-to-mesenchymal transition. Interacts with thrombomodulin/THBD to enhance the activation of protein C and thus potentiates its anticoagulant activity. The protein is Platelet factor 4 (Pf4) of Rattus norvegicus (Rat).